Here is a 218-residue protein sequence, read N- to C-terminus: Probable nicotinate-nucleotide adenylyltransferase (218 aa).

Belongs to the NadD family.

The enzyme catalyses nicotinate beta-D-ribonucleotide + ATP + H(+) = deamido-NAD(+) + diphosphate. The protein operates within cofactor biosynthesis; NAD(+) biosynthesis; deamido-NAD(+) from nicotinate D-ribonucleotide: step 1/1. Its function is as follows. Catalyzes the reversible adenylation of nicotinate mononucleotide (NaMN) to nicotinic acid adenine dinucleotide (NaAD). The polypeptide is Probable nicotinate-nucleotide adenylyltransferase (Helicobacter hepaticus (strain ATCC 51449 / 3B1)).